The chain runs to 215 residues: MSEHETTGEGRFSSIEIRVLGSLIEKQATSPETYPLTLNALVLACNQKTSREPVMNLSPGQVGQALRALEGQEMARLQMGSRADRWEQRVDKALELVPAQLVLMGLMFLRGPQTLNELLTRSNRLHDFEDVDQVQHQLERLISRGLALHLPRQAGQREDRYTHALGDPAQIEEILAARQQEGGGRSAGGSVSEERIEALEARIAALEARLAQLEG.

Belongs to the UPF0502 family.

This Pseudomonas entomophila (strain L48) protein is UPF0502 protein PSEEN2299.